Reading from the N-terminus, the 321-residue chain is tRNA U34 carboxymethyltransferase (321 aa).

Carboxy-S-adenosyl-L-methionine contacts are provided by residues K90, W104, K109, G129, 151-153, 180-181, M195, Y199, and R314; these read DPT and IE.

It belongs to the class I-like SAM-binding methyltransferase superfamily. CmoB family. Homotetramer.

The catalysed reaction is carboxy-S-adenosyl-L-methionine + 5-hydroxyuridine(34) in tRNA = 5-carboxymethoxyuridine(34) in tRNA + S-adenosyl-L-homocysteine + H(+). Catalyzes carboxymethyl transfer from carboxy-S-adenosyl-L-methionine (Cx-SAM) to 5-hydroxyuridine (ho5U) to form 5-carboxymethoxyuridine (cmo5U) at position 34 in tRNAs. In Actinobacillus succinogenes (strain ATCC 55618 / DSM 22257 / CCUG 43843 / 130Z), this protein is tRNA U34 carboxymethyltransferase.